The following is a 301-amino-acid chain: Cytosolic sulfotransferase 2 (301 aa).

53–58 contributes to the 3'-phosphoadenylyl sulfate binding site; the sequence is KAGTTW. The Proton acceptor role is filled by histidine 115. 3'-phosphoadenylyl sulfate contacts are provided by residues arginine 137, serine 145, tyrosine 201, 235–240, and 263–265; these read VQFDVM and RKG.

The protein belongs to the sulfotransferase 1 family. Expressed in liver.

It is found in the cytoplasm. Its activity is regulated as follows. Inhibited by Co(2+), Zn(2+), Cd(2+) and Pb(2+) ions. Inactivated by Hg(2+) and Cu(2+) ions. In terms of biological role, sulfotransferase that utilizes 3'-phospho-5'-adenylyl sulfate (PAPS) as sulfonate donor to catalyze the sulfate conjugation of a variety of xenobiotic and endogenous compounds, including 2-naphthol, hydroxychlorobiphenyls, T3 (triiodo-L-thyronine), T4 (thyroxine), estrone and DOPA. The protein is Cytosolic sulfotransferase 2 of Danio rerio (Zebrafish).